We begin with the raw amino-acid sequence, 397 residues long: Putative serine/threonine-protein kinase R301 (397 aa).

The 373-residue stretch at 25–397 (QIKSTSVGSG…IIRHFNSPRL (373 aa)) folds into the Protein kinase domain. Residues 31–39 (VGSGGSDNI) and K53 contribute to the ATP site. D218 serves as the catalytic Proton acceptor.

The protein belongs to the protein kinase superfamily. Ser/Thr protein kinase family.

The protein resides in the virion. It carries out the reaction L-seryl-[protein] + ATP = O-phospho-L-seryl-[protein] + ADP + H(+). The enzyme catalyses L-threonyl-[protein] + ATP = O-phospho-L-threonyl-[protein] + ADP + H(+). This chain is Putative serine/threonine-protein kinase R301, found in Acanthamoeba polyphaga (Amoeba).